Here is a 217-residue protein sequence, read N- to C-terminus: MOB kinase activator 3A (217 aa).

The Zn(2+) site is built by C83, C88, H165, and H170.

It belongs to the MOB1/phocein family.

In terms of biological role, may regulate the activity of kinases. The chain is MOB kinase activator 3A (Mob3a) from Mus musculus (Mouse).